A 1077-amino-acid polypeptide reads, in one-letter code: MSSQSHPDGLSGRDQPVELLNPARVNHMPSTVDVATALPLQVAPAAVPMDLRLDHQFSLPLEPALREQQLQQELLALKQKQQIQRQILIAEFQRQHEQLSRQHEAQLHEHIKQQQEMLAMKHQQELLEHQRKLERHRQEQELEKQHREQKLQQLKNKEKGKESAVASTEVKMKLQEFVLNKKKALAHRNLNHCMSSDPRYWYGKTQHSSLDQSSPPQSGVSASYNHPVLGMYDAKDDFPLRKTASEPNLKLRSRLKQKVAERRSSPLLRRKDGPVATALKKRPLDVTDSACSSAPGSGPSSPNSSSGNVSTENGIAPTVPSTPAETSLAHRLVTREGSVAPLPLYTSPSLPNITLGLPATGPAAGAAGQQDAERLALPALQQRISLFPGTHLTPYLSTSPLERDGGAAHNPLLQHMVLLEQPPTQTPLVTGLGALPLHTQSLVGADRVSPSIHKLRQHRPLGRTQSAPLPQNAQALQHLVIQQQHQQFLEKHKQQFQQQQLHLSKMISKPSEPPRQPESHPEETEEELREHQALLDEPYLDRLPGQKEPSLAGVQVKQEPIESEEEEVEATREAEPSQRPATEQELLFRQQALLLEQQRIHQLRNYQASMEAAGIPVSFGSHRPLSRAQSSPASATFPMSVQEPPTKPRFTTGLVYDTLMLKHQCTCGNTNSHPEHAGRIQSIWSRLQETGLRGKCECIRGRKATLEELQTVHSEAHTLLYGTNPLNRQKLDSSLTSVFVRLPCGGVGVDSDTIWNEVHSSGAARLAVGCVVELVFKVATGELKNGFAVVRPPGHHAEESTPMGFCYFNSVAIAAKLLQQRLNVSKILIVDWDVHHGNGTQQAFYNDPNVLYMSLHRYDDGNFFPGSGAPDEVGTGPGVGFNVNMAFTGGLDPPMGDAEYLAAFRTVVMPIANEFAPDVVLVSSGFDAVEGHPTPLGGYNLSAKCFGYLTKQLMGLAGGRIVLALEGGHDLTAICDASEACVSALLGNELEPLPEKVLHQRPNANAVHSMEKVMGIHSEYWRCLQRLSPTVGHSLIEAQKCENEEAETVTAMASLSVGVKPAEKRSEEEPMEEEPPL.

Residues 66 to 169 (REQQLQQELL…GKESAVASTE (104 aa)) are a coiled coil. The tract at residues 117 to 312 (MLAMKHQQEL…NSSSGNVSTE (196 aa)) is interaction with MEF2A. Positions 132 to 162 (KLERHRQEQELEKQHREQKLQQLKNKEKGKE) are enriched in basic and acidic residues. 3 disordered regions span residues 132 to 167 (KLERHRQEQELEKQHREQKLQQLKNKEKGKESAVAS), 204 to 225 (KTQHSSLDQSSPPQSGVSASYN), and 239 to 327 (PLRK…AETS). The span at 205 to 224 (TQHSSLDQSSPPQSGVSASY) shows a compositional bias: polar residues. Ser209 bears the Phosphoserine mark. Ser245 bears the Phosphoserine; by CaMK4 and SIK1 mark. The span at 258-273 (KVAERRSSPLLRRKDG) shows a compositional bias: basic and acidic residues. Residues 289 to 310 (SACSSAPGSGPSSPNSSSGNVS) are compositionally biased toward low complexity. Positions 348–353 (PSLPNI) match the PxLPxI/L motif; mediates interaction with ANKRA2 and 14-3-3 proteins motif. A Phosphoserine modification is found at Ser349. Residue Ser466 is modified to Phosphoserine; by CaMK4 and SIK1. 3 disordered regions span residues 508–530 (SKPSEPPRQPESHPEETEEELRE), 542–582 (RLPG…RPAT), and 623–646 (RPLSRAQSSPASATFPMSVQEPPT). Basic and acidic residues predominate over residues 515–530 (RQPESHPEETEEELRE). Lys557 is covalently cross-linked (Glycyl lysine isopeptide (Lys-Gly) (interchain with G-Cter in SUMO)). Phosphoserine occurs at positions 563, 630, and 631. Residues 627-639 (RAQSSPASATFPM) show a composition bias toward polar residues. The histone deacetylase stretch occupies residues 653–1077 (GLVYDTLMLK…EEPMEEEPPL (425 aa)). Positions 665, 667, 673, and 744 each coordinate Zn(2+). His796 is a catalytic residue. A Nuclear export signal motif is present at residues 1044–1077 (EEAETVTAMASLSVGVKPAEKRSEEEPMEEEPPL). The segment at 1052-1077 (MASLSVGVKPAEKRSEEEPMEEEPPL) is disordered.

This sequence belongs to the histone deacetylase family. HD type 2 subfamily. Homodimer. Homodimerization via its N-terminal domain. Interacts with HDAC7. Interacts with MEF2A, MEF2C, MEF2D, MORC2 and NR2C1. Interacts with a 14-3-3 chaperone proteins in a phosphorylation dependent manner. Interacts with 14-3-3 protein YWHAB. Interacts with KDM5B and AHRR. Interacts with BTBD14B. Interacts with MYOCD. Interacts (via PxLPxI/L motif) with ANKRA2 (via ankyrin repeats). Interacts with CUL7 (as part of the 3M complex); negatively regulated by ANKRA2. Interacts with EP300 in the presence of TFAP2C. Interacts with HSPA1A and HSPA1B leading to their deacetylation at 'Lys-77'. Interacts with ZBTB7B; the interaction allows the recruitment of HDAC4 on CD8 loci for deacetylation and possible inhibition of CD8 genes expression. Interacts with DHX36. Interacts with SIK3; this interaction leads to HDAC4 retention in the cytoplasm. Post-translationally, phosphorylated by CaMK4 at Ser-245, Ser-466 and Ser-630. Phosphorylation at other residues by CaMK2D is required for the interaction with 14-3-3. Phosphorylation at Ser-349, within the PxLPxI/L motif, impairs the binding of ANKRA2 but generates a high-affinity docking site for 14-3-3. Sumoylation on Lys-557 is promoted by the E3 SUMO-protein ligase RANBP2, and prevented by phosphorylation by CaMK4.

The protein resides in the nucleus. It is found in the cytoplasm. It carries out the reaction N(6)-acetyl-L-lysyl-[histone] + H2O = L-lysyl-[histone] + acetate. Responsible for the deacetylation of lysine residues on the N-terminal part of the core histones (H2A, H2B, H3 and H4). Histone deacetylation gives a tag for epigenetic repression and plays an important role in transcriptional regulation, cell cycle progression and developmental events. Histone deacetylases act via the formation of large multiprotein complexes. Involved in muscle maturation via its interaction with the myocyte enhancer factors such as MEF2A, MEF2C and MEF2D. Deacetylates HSPA1A and HSPA1B at 'Lys-77' leading to their preferential binding to co-chaperone STUB1. The sequence is that of Histone deacetylase 4 (Hdac4) from Rattus norvegicus (Rat).